The following is a 231-amino-acid chain: E3 ubiquitin-protein ligase At3g02290 (231 aa).

The segment covering 103–118 (GSSHSHEEVEPLRSDS) has biased composition (basic and acidic residues). Residues 103 to 125 (GSSHSHEEVEPLRSDSDADSESF) are disordered. The RING-type; atypical zinc-finger motif lies at 181-222 (CPTCLEEYTSENPKIVTKCSHHFHLSCIYEWMERSENCPVCG).

It is found in the cytoplasm. The catalysed reaction is S-ubiquitinyl-[E2 ubiquitin-conjugating enzyme]-L-cysteine + [acceptor protein]-L-lysine = [E2 ubiquitin-conjugating enzyme]-L-cysteine + N(6)-ubiquitinyl-[acceptor protein]-L-lysine.. The protein operates within protein modification; protein ubiquitination. Its function is as follows. Mediates E2-dependent protein ubiquitination. The sequence is that of E3 ubiquitin-protein ligase At3g02290 from Arabidopsis thaliana (Mouse-ear cress).